The primary structure comprises 209 residues: Small ribosomal subunit protein uS4 (209 aa).

The S4 RNA-binding domain maps to 99–179; it reads GRLDSVAYRM…FPEWIEVDAK (81 aa).

Belongs to the universal ribosomal protein uS4 family. As to quaternary structure, part of the 30S ribosomal subunit. Contacts protein S5. The interaction surface between S4 and S5 is involved in control of translational fidelity.

One of the primary rRNA binding proteins, it binds directly to 16S rRNA where it nucleates assembly of the body of the 30S subunit. Functionally, with S5 and S12 plays an important role in translational accuracy. The polypeptide is Small ribosomal subunit protein uS4 (Azoarcus sp. (strain BH72)).